We begin with the raw amino-acid sequence, 227 residues long: MKHAEVPPPPEAAEAVFGPALEKAHLYARILAGAGVERGLLGPREVERLWDRHILNCAVVGELLQPGERVADIGSGAGLPGIPLALARPDVHVILIEPLLRRSEFLRETIEEIGIDCDVVRGRAEDRSVREEVGTTDVVVSRAVASLDKLTKWSSPLLRVGGRMLAIKGERADDEVQQHRRAMAALGVSEVKVERCGGQYVEPPATVVVGFQGVAKVSQSRSGRRHR.

S-adenosyl-L-methionine-binding positions include Gly74, Leu79, 124 to 125 (AE), and Arg142.

The protein belongs to the methyltransferase superfamily. RNA methyltransferase RsmG family.

It is found in the cytoplasm. In terms of biological role, specifically methylates the N7 position of guanine in position 518 of 16S rRNA. This chain is Ribosomal RNA small subunit methyltransferase G, found in Mycolicibacterium vanbaalenii (strain DSM 7251 / JCM 13017 / BCRC 16820 / KCTC 9966 / NRRL B-24157 / PYR-1) (Mycobacterium vanbaalenii).